Consider the following 606-residue polypeptide: Alpha-1,2-mannosyltransferase MNN23 (606 aa).

Residues 1 to 14 (MSINFLSIPRNRFK) lie on the Cytoplasmic side of the membrane. Residues 15-35 (AIGVLSVTCILIYVILHSSII) form a helical membrane-spanning segment. Over 36-606 (TTDFDVSDYG…QVAWLSKSQN (571 aa)) the chain is Extracellular. Residues 59–86 (DNGENLKDPQPELDNDKGNGETDTTTSN) form a disordered region. The span at 62–78 (ENLKDPQPELDNDKGNG) shows a compositional bias: basic and acidic residues.

Belongs to the MNN1/MNT family.

The protein localises to the golgi apparatus membrane. Its pathway is protein modification; protein glycosylation. In terms of biological role, alpha-1,2-mannosyltransferase required for cell wall integrity. Responsible for addition of the first alpha-1,2-linked mannose to form the branches on the mannan backbone of oligosaccharides. Addition of alpha-1,2-mannose is required for stabilization of the alpha-1,6-mannose backbone and hence regulates mannan fibril length; and is important for both immune recognition and virulence. This is Alpha-1,2-mannosyltransferase MNN23 (MNN23) from Candida albicans (strain SC5314 / ATCC MYA-2876) (Yeast).